The primary structure comprises 495 residues: DNA double-strand break repair helicase HerA (495 aa).

Residues R141, 150 to 155 (GSGKSN), and 458 to 459 (KI) contribute to the ATP site.

The protein belongs to the HerA family. Forms a hexamer or a heptamer. Interacts with Mre11.

It catalyses the reaction Couples ATP hydrolysis with the unwinding of duplex DNA at the replication fork by translocating in the 5'-3' direction. This creates two antiparallel DNA single strands (ssDNA). The leading ssDNA polymer is the template for DNA polymerase III holoenzyme which synthesizes a continuous strand.. The enzyme catalyses ATP + H2O = ADP + phosphate + H(+). The catalysed reaction is Couples ATP hydrolysis with the unwinding of duplex DNA by translocating in the 3'-5' direction.. With respect to regulation, ATPase activity is slightly stimulated by either circular single- or double-stranded (ds)DNA with a weak preference for dsDNA. Helicase activity is stimulated by Mre11. Its function is as follows. Involved in DNA double-strand break (DSB) repair. Probably acts with NurA to stimulate resection of the 5' strand and produce the long 3' single-strand that is required for RadA loading. Has DNA-dependent ATPase activity and bidirectional DNA helicase activity. Loads on either a 3' or a 5' DNA tail for subsequent DNA unwinding. Can also unwind blunt-ended dsDNA, Holliday junction and splayed-arm DNA. The protein is DNA double-strand break repair helicase HerA of Sulfurisphaera tokodaii (strain DSM 16993 / JCM 10545 / NBRC 100140 / 7) (Sulfolobus tokodaii).